The chain runs to 161 residues: SsrA-binding protein (161 aa).

The protein belongs to the SmpB family.

It is found in the cytoplasm. Required for rescue of stalled ribosomes mediated by trans-translation. Binds to transfer-messenger RNA (tmRNA), required for stable association of tmRNA with ribosomes. tmRNA and SmpB together mimic tRNA shape, replacing the anticodon stem-loop with SmpB. tmRNA is encoded by the ssrA gene; the 2 termini fold to resemble tRNA(Ala) and it encodes a 'tag peptide', a short internal open reading frame. During trans-translation Ala-aminoacylated tmRNA acts like a tRNA, entering the A-site of stalled ribosomes, displacing the stalled mRNA. The ribosome then switches to translate the ORF on the tmRNA; the nascent peptide is terminated with the 'tag peptide' encoded by the tmRNA and targeted for degradation. The ribosome is freed to recommence translation, which seems to be the essential function of trans-translation. In Vibrio vulnificus (strain YJ016), this protein is SsrA-binding protein.